We begin with the raw amino-acid sequence, 137 residues long: Large ribosomal subunit protein bL17 (137 aa).

This sequence belongs to the bacterial ribosomal protein bL17 family. As to quaternary structure, part of the 50S ribosomal subunit. Contacts protein L32.

The protein is Large ribosomal subunit protein bL17 of Rickettsia typhi (strain ATCC VR-144 / Wilmington).